Consider the following 1158-residue polypeptide: Putative HERC2-like protein 3 (1158 aa).

The segment at 281-302 (PRKKRVPKKPESTDDEEKIGNE) is disordered. The segment covering 293–302 (TDDEEKIGNE) has biased composition (acidic residues). An MIB/HERC2 domain is found at 587–660 (SGPELAAMMK…NYDLKLAELP (74 aa)). Positions 662–684 (PAQPSAEDSDTEDDSEAEQTERN) are disordered. Positions 668-679 (EDSDTEDDSEAE) are enriched in acidic residues.

This is Putative HERC2-like protein 3 (HERC2P3) from Homo sapiens (Human).